The following is a 216-amino-acid chain: Somatotropin (216 aa).

The signal sequence occupies residues 1–26 (MAAGPRNSVLLAFALLCLPWPQEVGT). Zn(2+) is bound at residue H45. A disulfide bridge connects residues C78 and C189. S131 is modified (phosphoserine). Zn(2+) is bound at residue E198. C206 and C214 are disulfide-bonded.

The protein belongs to the somatotropin/prolactin family.

Its subcellular location is the secreted. Plays an important role in growth control. Its major role in stimulating body growth is to stimulate the liver and other tissues to secrete IGF1. It stimulates both the differentiation and proliferation of myoblasts. It also stimulates amino acid uptake and protein synthesis in muscle and other tissues. This is Somatotropin (GH1) from Felis catus (Cat).